A 349-amino-acid polypeptide reads, in one-letter code: UDP-3-O-acylglucosamine N-acyltransferase (349 aa).

His-246 acts as the Proton acceptor in catalysis.

Belongs to the transferase hexapeptide repeat family. LpxD subfamily. In terms of assembly, homotrimer.

It catalyses the reaction a UDP-3-O-[(3R)-3-hydroxyacyl]-alpha-D-glucosamine + a (3R)-hydroxyacyl-[ACP] = a UDP-2-N,3-O-bis[(3R)-3-hydroxyacyl]-alpha-D-glucosamine + holo-[ACP] + H(+). It participates in bacterial outer membrane biogenesis; LPS lipid A biosynthesis. Its function is as follows. Catalyzes the N-acylation of UDP-3-O-acylglucosamine using 3-hydroxyacyl-ACP as the acyl donor. Is involved in the biosynthesis of lipid A, a phosphorylated glycolipid that anchors the lipopolysaccharide to the outer membrane of the cell. The chain is UDP-3-O-acylglucosamine N-acyltransferase from Nostoc sp. (strain PCC 7120 / SAG 25.82 / UTEX 2576).